The sequence spans 141 residues: Large ribosomal subunit protein uL11 (141 aa).

Belongs to the universal ribosomal protein uL11 family. Part of the ribosomal stalk of the 50S ribosomal subunit. Interacts with L10 and the large rRNA to form the base of the stalk. L10 forms an elongated spine to which L12 dimers bind in a sequential fashion forming a multimeric L10(L12)X complex. Post-translationally, one or more lysine residues are methylated.

Forms part of the ribosomal stalk which helps the ribosome interact with GTP-bound translation factors. This Clostridium kluyveri (strain ATCC 8527 / DSM 555 / NBRC 12016 / NCIMB 10680 / K1) protein is Large ribosomal subunit protein uL11.